The sequence spans 682 residues: Potassium-transporting ATPase ATP-binding subunit (682 aa).

The next 4 helical transmembrane spans lie at 35-55, 62-82, 219-239, and 254-274; these read VMFI…AMAG, ATFT…ANFA, IALT…TATI, and VLVA…LSAI. The 4-aspartylphosphate intermediate role is filled by D307. ATP-binding positions include D344, E348, 377 to 384, and K395; that span reads FTAQTRMS. Residues D518 and D522 each coordinate Mg(2+). 3 helical membrane-spanning segments follow: residues 588 to 608, 616 to 636, and 656 to 676; these read FAII…LNVM, AILS…PLAL, and IYGL…DLLL.

It belongs to the cation transport ATPase (P-type) (TC 3.A.3) family. Type IA subfamily. The system is composed of three essential subunits: KdpA, KdpB and KdpC.

Its subcellular location is the cell inner membrane. The catalysed reaction is K(+)(out) + ATP + H2O = K(+)(in) + ADP + phosphate + H(+). Part of the high-affinity ATP-driven potassium transport (or Kdp) system, which catalyzes the hydrolysis of ATP coupled with the electrogenic transport of potassium into the cytoplasm. This subunit is responsible for energy coupling to the transport system and for the release of the potassium ions to the cytoplasm. This is Potassium-transporting ATPase ATP-binding subunit from Klebsiella pneumoniae (strain 342).